The following is a 564-amino-acid chain: Beta-hexosaminidase subunit B2 (564 aa).

The N-terminal stretch at 1–19 (MKLKFIFLILFFIIGNSIG) is a signal peptide. Residues Asn-43, Asn-84, Asn-303, and Asn-347 are each glycosylated (N-linked (GlcNAc...) asparagine). The active-site Proton donor is Glu-357. N-linked (GlcNAc...) asparagine glycosylation is found at Asn-364, Asn-377, Asn-439, Asn-524, and Asn-551.

This sequence belongs to the glycosyl hydrolase 20 family.

The protein resides in the lysosome. The enzyme catalyses Hydrolysis of terminal non-reducing N-acetyl-D-hexosamine residues in N-acetyl-beta-D-hexosaminides.. Functionally, responsible for the degradation of GM2 gangliosides, and a variety of other molecules containing terminal N-acetyl hexosamines. This chain is Beta-hexosaminidase subunit B2 (hexb2), found in Dictyostelium discoideum (Social amoeba).